We begin with the raw amino-acid sequence, 204 residues long: Leucyl/phenylalanyl-tRNA--protein transferase (204 aa).

It belongs to the L/F-transferase family.

It localises to the cytoplasm. It carries out the reaction N-terminal L-lysyl-[protein] + L-leucyl-tRNA(Leu) = N-terminal L-leucyl-L-lysyl-[protein] + tRNA(Leu) + H(+). It catalyses the reaction N-terminal L-arginyl-[protein] + L-leucyl-tRNA(Leu) = N-terminal L-leucyl-L-arginyl-[protein] + tRNA(Leu) + H(+). The enzyme catalyses L-phenylalanyl-tRNA(Phe) + an N-terminal L-alpha-aminoacyl-[protein] = an N-terminal L-phenylalanyl-L-alpha-aminoacyl-[protein] + tRNA(Phe). Functions in the N-end rule pathway of protein degradation where it conjugates Leu, Phe and, less efficiently, Met from aminoacyl-tRNAs to the N-termini of proteins containing an N-terminal arginine or lysine. The polypeptide is Leucyl/phenylalanyl-tRNA--protein transferase (Rhizobium johnstonii (strain DSM 114642 / LMG 32736 / 3841) (Rhizobium leguminosarum bv. viciae)).